The primary structure comprises 151 residues: Flagellar assembly factor FliW (151 aa).

Belongs to the FliW family. As to quaternary structure, interacts with translational regulator CsrA and flagellin(s).

It localises to the cytoplasm. Its function is as follows. Acts as an anti-CsrA protein, binds CsrA and prevents it from repressing translation of its target genes, one of which is flagellin. Binds to flagellin and participates in the assembly of the flagellum. This chain is Flagellar assembly factor FliW, found in Halalkalibacterium halodurans (strain ATCC BAA-125 / DSM 18197 / FERM 7344 / JCM 9153 / C-125) (Bacillus halodurans).